The following is a 129-amino-acid chain: ATP synthase epsilon chain (129 aa).

It belongs to the ATPase epsilon chain family. F-type ATPases have 2 components, CF(1) - the catalytic core - and CF(0) - the membrane proton channel. CF(1) has five subunits: alpha(3), beta(3), gamma(1), delta(1), epsilon(1). CF(0) has three main subunits: a, b and c.

It is found in the cell inner membrane. Functionally, produces ATP from ADP in the presence of a proton gradient across the membrane. The polypeptide is ATP synthase epsilon chain (Campylobacter jejuni subsp. jejuni serotype O:2 (strain ATCC 700819 / NCTC 11168)).